A 185-amino-acid polypeptide reads, in one-letter code: Ribosome-recycling factor (185 aa).

The protein belongs to the RRF family.

The protein localises to the cytoplasm. Its function is as follows. Responsible for the release of ribosomes from messenger RNA at the termination of protein biosynthesis. May increase the efficiency of translation by recycling ribosomes from one round of translation to another. This is Ribosome-recycling factor from Campylobacter jejuni subsp. jejuni serotype O:2 (strain ATCC 700819 / NCTC 11168).